Here is a 328-residue protein sequence, read N- to C-terminus: DNA polymerase IV (328 aa).

One can recognise a UmuC domain in the interval 6–187 (IIHIDMDYFF…LDIGDFPGVG (182 aa)). Asp-10 and Asp-105 together coordinate Mg(2+). Residue Glu-106 is part of the active site.

The protein belongs to the DNA polymerase type-Y family. As to quaternary structure, monomer. Requires Mg(2+) as cofactor.

The protein localises to the cytoplasm. It catalyses the reaction DNA(n) + a 2'-deoxyribonucleoside 5'-triphosphate = DNA(n+1) + diphosphate. In terms of biological role, poorly processive, error-prone DNA polymerase involved in untargeted mutagenesis. Copies undamaged DNA at stalled replication forks, which arise in vivo from mismatched or misaligned primer ends. These misaligned primers can be extended by PolIV. Exhibits no 3'-5' exonuclease (proofreading) activity. May be involved in translesional synthesis, in conjunction with the beta clamp from PolIII. This chain is DNA polymerase IV, found in Staphylococcus aureus (strain bovine RF122 / ET3-1).